Reading from the N-terminus, the 433-residue chain is Chaperone SurA (433 aa).

Residues 1–24 (MDGIKLLLSIIILYFYTYINCAIA) form the signal peptide. PpiC domains follow at residues 173-274 (NTTF…KVHD) and 285-385 (ITEV…QLQN).

Its subcellular location is the periplasm. It carries out the reaction [protein]-peptidylproline (omega=180) = [protein]-peptidylproline (omega=0). Chaperone involved in the correct folding and assembly of outer membrane proteins. Recognizes specific patterns of aromatic residues and the orientation of their side chains, which are found more frequently in integral outer membrane proteins. May act in both early periplasmic and late outer membrane-associated steps of protein maturation. This is Chaperone SurA from Baumannia cicadellinicola subsp. Homalodisca coagulata.